The sequence spans 216 residues: Ribosomal RNA small subunit methyltransferase G (216 aa).

Residues glycine 81, leucine 86, 132 to 133, and arginine 147 contribute to the S-adenosyl-L-methionine site; that span reads VE.

Belongs to the methyltransferase superfamily. RNA methyltransferase RsmG family.

The protein resides in the cytoplasm. It catalyses the reaction guanosine(527) in 16S rRNA + S-adenosyl-L-methionine = N(7)-methylguanosine(527) in 16S rRNA + S-adenosyl-L-homocysteine. Its function is as follows. Specifically methylates the N7 position of guanine in position 527 of 16S rRNA. The polypeptide is Ribosomal RNA small subunit methyltransferase G (Hydrogenovibrio crunogenus (strain DSM 25203 / XCL-2) (Thiomicrospira crunogena)).